A 762-amino-acid polypeptide reads, in one-letter code: Coleoptile phototropism protein 1 (762 aa).

Residues 1–12 are compositionally biased toward basic and acidic residues; the sequence is MWESESESHGGE. The disordered stretch occupies residues 1–29; that stretch reads MWESESESHGGERGLVPVGGGGGSGRHEA. A BTB domain is found at 51 to 128; that stretch reads SDLLVKVGDV…SYGMAVDLTA (78 aa). Over residues 227–238 the composition is skewed to gly residues; that stretch reads PAAIRGGGGSGG. Disordered regions lie at residues 227-264, 460-495, 687-718, and 731-762; these read PAAI…RQAV, MAVA…ASAS, QVDG…AWSS, and GADA…NSIS. Residues 268–607 enclose the NPH3 domain; it reads DWWFEDVSVL…VQVLFTEQVK (340 aa). Residues 654 to 691 adopt a coiled-coil conformation; that stretch reads AAAKKDINTLKFELESMKAKYLELQHEMDALQKQVDGR. Over residues 696-709 the composition is skewed to low complexity; it reads PSPAAAKIGKQQQQ. Positions 736–747 are enriched in gly residues; the sequence is AGGGVAPPGGGE. The span at 752 to 762 shows a compositional bias: basic residues; the sequence is KGPRRWRNSIS.

Belongs to the NPH3 family.

The protein operates within protein modification; protein ubiquitination. Functionally, may act as a substrate-specific adapter of an E3 ubiquitin-protein ligase complex (CUL3-RBX1-BTB) which mediates the ubiquitination and subsequent proteasomal degradation of target proteins. Plays a role as signal transduction component in coleoptile phototropism and lateral translocation of auxin. The protein is Coleoptile phototropism protein 1 (CPT1) of Oryza sativa subsp. japonica (Rice).